The primary structure comprises 276 residues: Ribonuclease T2 (276 aa).

The N-terminal stretch at 1–17 (MGMLALGAMQLAAGAVF) is a signal peptide. 5 cysteine pairs are disulfide-bonded: Cys-22–Cys-41, Cys-30–Cys-77, Cys-40–Cys-143, Cys-85–Cys-135, and Cys-208–Cys-242. The N-linked (GlcNAc...) asparagine glycan is linked to Asn-32. Residue His-70 is part of the active site. Asn-93 carries an N-linked (GlcNAc...) asparagine glycan. Residues Glu-128 and His-132 contribute to the active site. The N-linked (GlcNAc...) asparagine glycan is linked to Asn-256.

This sequence belongs to the RNase T2 family.

The enzyme catalyses a ribonucleotidyl-ribonucleotide-RNA + H2O = a 3'-end 3'-phospho-ribonucleotide-RNA + a 5'-end dephospho-ribonucleoside-RNA + H(+). The chain is Ribonuclease T2 (rntB) from Aspergillus oryzae (strain ATCC 42149 / RIB 40) (Yellow koji mold).